Consider the following 247-residue polypeptide: Mycofactocin precursor peptide peptidase (247 aa).

A divalent metal cation-binding residues include Glu-38, His-40, Asp-49, His-124, and Glu-163.

The protein belongs to the creatininase superfamily. As to quaternary structure, homooctamer. The cofactor is Fe(2+). It depends on Zn(2+) as a cofactor.

It carries out the reaction [mycofactocin precursor peptide]-C-terminal glycyl-N-{5-[(4-hydroxyphenyl)methyl]-4,4-dimethyl-2-oxopyrrolidin-3-yl}acetamide + H2O = [mycofactocin precursor peptide]-C-terminal glycine + 3-amino-5-[(4-hydroxyphenyl)methyl]-4,4-dimethyl-2-pyrrolidin-2-one. In terms of biological role, peptidase involved in the biosynthesis of the enzyme cofactor mycofactocin (MFT). Catalyzes cleavage of the MftC-modified MftA peptide to liberate its final two residues, which consist of a cross-linked valine-decarboxylated tyrosine dipeptide (named 3-amino-5-[(4-hydroxyphenyl)methyl]-4,4-dimethyl-2-pyrrolidin-2-one or ADHP). Is required for the in vivo ethanol assimilation in M.smegmatis. This is Mycofactocin precursor peptide peptidase from Mycolicibacterium smegmatis (strain ATCC 700084 / mc(2)155) (Mycobacterium smegmatis).